Here is a 218-residue protein sequence, read N- to C-terminus: Response regulator UvrY (218 aa).

Residues 3-119 enclose the Response regulatory domain; it reads NVLLVDDHEL…EVVSAIRSVY (117 aa). Asp-54 is subject to 4-aspartylphosphate. The region spanning 143–208 is the HTH luxR-type domain; that stretch reads TESPFASLSE…ELTHLAIRHG (66 aa). Residues 167 to 186 constitute a DNA-binding region (H-T-H motif); that stretch reads VNEISEQLNLSPKTVNSYRY.

In terms of processing, phosphorylated and activated by BarA.

The protein localises to the cytoplasm. In terms of biological role, member of the two-component regulatory system UvrY/BarA involved in the regulation of carbon metabolism via the CsrA/CsrB regulatory system. UvrY activates the transcription of the untranslated csrB RNA and of barA, in an autoregulatory loop. Mediates the effects of CsrA on csrB RNA by BarA-dependent and BarA-independent mechanisms. This is Response regulator UvrY (uvrY) from Escherichia coli (strain K12).